A 499-amino-acid chain; its full sequence is Glycerol kinase (499 aa).

T13 provides a ligand contact to ADP. 3 residues coordinate ATP: T13, T14, and S15. T13 is a binding site for sn-glycerol 3-phosphate. R17 contacts ADP. R83, E84, Y135, and D244 together coordinate sn-glycerol 3-phosphate. Positions 83, 84, 135, 244, and 245 each coordinate glycerol. 2 residues coordinate ADP: T266 and G310. 4 residues coordinate ATP: T266, G310, Q314, and G411. ADP contacts are provided by G411 and N415.

The protein belongs to the FGGY kinase family.

The enzyme catalyses glycerol + ATP = sn-glycerol 3-phosphate + ADP + H(+). Its pathway is polyol metabolism; glycerol degradation via glycerol kinase pathway; sn-glycerol 3-phosphate from glycerol: step 1/1. Its activity is regulated as follows. Inhibited by fructose 1,6-bisphosphate (FBP). Key enzyme in the regulation of glycerol uptake and metabolism. Catalyzes the phosphorylation of glycerol to yield sn-glycerol 3-phosphate. In Pseudothermotoga lettingae (strain ATCC BAA-301 / DSM 14385 / NBRC 107922 / TMO) (Thermotoga lettingae), this protein is Glycerol kinase.